Reading from the N-terminus, the 473-residue chain is Lactococcin A secretion protein LcnD-like (473 aa).

The Cytoplasmic segment spans residues 1-21 (MFDKKLLESSELYDKRYRNFS). The chain crosses the membrane as a helical span at residues 22 to 44 (TLIILPLFILLVGGVIFTFFAHK). Over 45-473 (ELTVISTGSI…FLDKIMGRTS (429 aa)) the chain is Extracellular.

It belongs to the membrane fusion protein (MFP) (TC 8.A.1) family.

It is found in the cell membrane. Its function is as follows. Involved in the secretion of a lactococcin. The chain is Lactococcin A secretion protein LcnD-like (lcnD) from Lactococcus lactis subsp. lactis (strain IL1403) (Streptococcus lactis).